Consider the following 105-residue polypeptide: UPF0145 protein HD_1349 (105 aa).

Belongs to the UPF0145 family.

The protein is UPF0145 protein HD_1349 of Haemophilus ducreyi (strain 35000HP / ATCC 700724).